A 358-amino-acid chain; its full sequence is Peptide chain release factor 1 (358 aa).

N5-methylglutamine is present on Q233.

This sequence belongs to the prokaryotic/mitochondrial release factor family. Post-translationally, methylated by PrmC. Methylation increases the termination efficiency of RF1.

The protein resides in the cytoplasm. Its function is as follows. Peptide chain release factor 1 directs the termination of translation in response to the peptide chain termination codons UAG and UAA. The polypeptide is Peptide chain release factor 1 (Clostridium botulinum (strain 657 / Type Ba4)).